A 474-amino-acid chain; its full sequence is MEFETVIGLEIHAQLKTNTKIFCACSTQYGAAPNSHTCPICLGMPGVLPVLNKKVVEYSIKMGLATGSRINQWNQFARKNYFYPDLPKGYQTSQFDLPIVEGGHIEIEVDGVSKVIGITRMHMEEDAGKLVHDDVEPVSHVDLNRTGTPLLEIVSEPDMRSPQEAYAYLKKVHAILRYLDICDGNMQEGSFRCDANISLRPMGQEKLGTRTELKNMNSFKNVQAALEYEVRRQRDLLLEGEKVIQQTLLWDPDKNRTEAMRGKEDAHDYRYFPCPDLVPIEISDEWIEEIRASLPELPEQCKARFIVDYALSEDDAVQLTSERDLALFFEEVVAAGAHPKKSANWIMTELLRELGGESIVDCRVQASQLSALLLMVDQGMISGKIAKTVFAEMMAEGTDPQLIVKEKNLLQVSDEGELLAIVDEIVAANVQQAEDFRAGKTKLMGFFVGQLMKKTKGKANPGLANELFNKALNK.

Belongs to the GatB/GatE family. GatB subfamily. In terms of assembly, heterotrimer of A, B and C subunits.

It catalyses the reaction L-glutamyl-tRNA(Gln) + L-glutamine + ATP + H2O = L-glutaminyl-tRNA(Gln) + L-glutamate + ADP + phosphate + H(+). It carries out the reaction L-aspartyl-tRNA(Asn) + L-glutamine + ATP + H2O = L-asparaginyl-tRNA(Asn) + L-glutamate + ADP + phosphate + 2 H(+). Its function is as follows. Allows the formation of correctly charged Asn-tRNA(Asn) or Gln-tRNA(Gln) through the transamidation of misacylated Asp-tRNA(Asn) or Glu-tRNA(Gln) in organisms which lack either or both of asparaginyl-tRNA or glutaminyl-tRNA synthetases. The reaction takes place in the presence of glutamine and ATP through an activated phospho-Asp-tRNA(Asn) or phospho-Glu-tRNA(Gln). This chain is Aspartyl/glutamyl-tRNA(Asn/Gln) amidotransferase subunit B, found in Desulfotalea psychrophila (strain LSv54 / DSM 12343).